Here is a 279-residue protein sequence, read N- to C-terminus: Ribosomal RNA small subunit methyltransferase A (279 aa).

The S-adenosyl-L-methionine site is built by Leu42, Gly67, Glu88, Asp113, and Asn129.

Belongs to the class I-like SAM-binding methyltransferase superfamily. rRNA adenine N(6)-methyltransferase family. RsmA subfamily.

It localises to the cytoplasm. The catalysed reaction is adenosine(1518)/adenosine(1519) in 16S rRNA + 4 S-adenosyl-L-methionine = N(6)-dimethyladenosine(1518)/N(6)-dimethyladenosine(1519) in 16S rRNA + 4 S-adenosyl-L-homocysteine + 4 H(+). Specifically dimethylates two adjacent adenosines (A1518 and A1519) in the loop of a conserved hairpin near the 3'-end of 16S rRNA in the 30S particle. May play a critical role in biogenesis of 30S subunits. In Thermotoga maritima (strain ATCC 43589 / DSM 3109 / JCM 10099 / NBRC 100826 / MSB8), this protein is Ribosomal RNA small subunit methyltransferase A.